A 232-amino-acid polypeptide reads, in one-letter code: Anti-sigma-K factor RskA (232 aa).

Topologically, residues 1 to 90 (MTEHTDFELL…EVRRQSRWRT (90 aa)) are cytoplasmic. The helical transmembrane segment at 91 to 111 (AAFASAAAIAVGLGAFGLGVL) threads the bilayer. The Extracellular portion of the chain corresponds to 112 to 232 (TRPSPPPTVA…GTILAELPLG (121 aa)).

The protein belongs to the anti-sigma-K factor family.

Its subcellular location is the cell membrane. An anti-sigma factor for extracytoplasmic function (ECF) sigma factor SigK. ECF sigma factors are held in an inactive form by an anti-sigma factor until released by regulated intramembrane proteolysis (RIP). RIP occurs when an extracytoplasmic signal triggers a concerted proteolytic cascade to transmit information and elicit cellular responses. The membrane-spanning regulatory substrate protein is first cut extracytoplasmically (site-1 protease, S1P), then within the membrane itself (site-2 protease, S2P, Rip1), while cytoplasmic proteases finish degrading the regulatory protein, liberating the sigma factor. This Mycobacterium tuberculosis (strain ATCC 25177 / H37Ra) protein is Anti-sigma-K factor RskA (rskA).